A 405-amino-acid chain; its full sequence is L-carnitine CoA-transferase (405 aa).

Residues Lys97 and Arg104 each contribute to the CoA site. Asp169 functions as the Nucleophile in the catalytic mechanism.

It belongs to the CoA-transferase III family. CaiB subfamily. Homodimer.

It localises to the cytoplasm. The catalysed reaction is crotonobetainyl-CoA + (R)-carnitine = crotonobetaine + (R)-carnitinyl-CoA. The enzyme catalyses 4-(trimethylamino)butanoyl-CoA + (R)-carnitine = (R)-carnitinyl-CoA + 4-(trimethylamino)butanoate. The protein operates within amine and polyamine metabolism; carnitine metabolism. Functionally, catalyzes the reversible transfer of the CoA moiety from gamma-butyrobetainyl-CoA to L-carnitine to generate L-carnitinyl-CoA and gamma-butyrobetaine. Is also able to catalyze the reversible transfer of the CoA moiety from gamma-butyrobetainyl-CoA or L-carnitinyl-CoA to crotonobetaine to generate crotonobetainyl-CoA. The protein is L-carnitine CoA-transferase of Escherichia coli (strain 55989 / EAEC).